The primary structure comprises 267 residues: Tryptophan synthase alpha chain (267 aa).

Residues Glu49 and Asp60 each act as proton acceptor in the active site.

Belongs to the TrpA family. In terms of assembly, tetramer of two alpha and two beta chains.

The catalysed reaction is (1S,2R)-1-C-(indol-3-yl)glycerol 3-phosphate + L-serine = D-glyceraldehyde 3-phosphate + L-tryptophan + H2O. It participates in amino-acid biosynthesis; L-tryptophan biosynthesis; L-tryptophan from chorismate: step 5/5. The alpha subunit is responsible for the aldol cleavage of indoleglycerol phosphate to indole and glyceraldehyde 3-phosphate. This chain is Tryptophan synthase alpha chain, found in Acidothermus cellulolyticus (strain ATCC 43068 / DSM 8971 / 11B).